Reading from the N-terminus, the 518-residue chain is Chromosomal replication initiator protein DnaA (518 aa).

The interval 1–72 is domain I, interacts with DnaA modulators; sequence MTLAEFWPLC…VREELAAGRS (72 aa). The segment at 72–180 is domain II; that stretch reads SAFVFKPGEG…DAEEARYEQT (109 aa). Residues 181-397 are domain III, AAA+ region; it reads NLSPDYTFDT…GAFNRVGASS (217 aa). ATP-binding residues include Gly-225, Gly-227, Lys-228, and Thr-229. The segment at 398–518 is domain IV, binds dsDNA; that stretch reads RFMNRPVIDI…YEKLLILIQN (121 aa).

It belongs to the DnaA family. Oligomerizes as a right-handed, spiral filament on DNA at oriC.

Its subcellular location is the cytoplasm. Its function is as follows. Plays an essential role in the initiation and regulation of chromosomal replication. ATP-DnaA binds to the origin of replication (oriC) to initiate formation of the DNA replication initiation complex once per cell cycle. Binds the DnaA box (a 9 base pair repeat at the origin) and separates the double-stranded (ds)DNA. Forms a right-handed helical filament on oriC DNA; dsDNA binds to the exterior of the filament while single-stranded (ss)DNA is stabiized in the filament's interior. The ATP-DnaA-oriC complex binds and stabilizes one strand of the AT-rich DNA unwinding element (DUE), permitting loading of DNA polymerase. After initiation quickly degrades to an ADP-DnaA complex that is not apt for DNA replication. Binds acidic phospholipids. The protein is Chromosomal replication initiator protein DnaA of Neisseria meningitidis serogroup C / serotype 2a (strain ATCC 700532 / DSM 15464 / FAM18).